The sequence spans 593 residues: Bifunctional purine biosynthesis protein ATIC (593 aa).

An MGS-like domain is found at 1–147; the sequence is MAARQQLALL…KNHARVTVVC (147 aa). Residues 1–199 are IMP cyclohydrolase; it reads MAARQQLALL…ISDYFRKEYS (199 aa). Residues 13–15, 35–38, 65–68, 102–103, and 126–127 contribute to the IMP site; these read SEK, SGGT, RVKT, CN, and DI. Lys138 acts as the Proton donor/acceptor; for FAICAR cyclization activity in catalysis. Lys200 carries the N6-acetyllysine modification. Residues 200–593 form an AICAR formyltransferase region; sequence KGVSQLPLRY…IHTNLRLFHH (394 aa). 5-amino-1-(5-phospho-beta-D-ribosyl)imidazole-4-carboxamide contacts are provided by residues 208–209, His268, Gly317, Asp340, Asn432, and Arg452; that span reads RY. His268 (proton acceptor; for AICAR formyltransferase activity) is an active-site residue. Position 453 (Ile453) interacts with (6R)-10-formyltetrahydrofolate. Residue Phe542 coordinates 5-amino-1-(5-phospho-beta-D-ribosyl)imidazole-4-carboxamide. (6R)-10-formyltetrahydrofolate-binding positions include Asp547 and 566 to 567; that span reads SA. Arg589 contacts 5-amino-1-(5-phospho-beta-D-ribosyl)imidazole-4-carboxamide.

Belongs to the PurH family. As to quaternary structure, homodimer. Associates with internalized INSR complexes on Golgi/endosomal membranes. Interacts with INSR; ATIC together with PRKAA2/AMPK2 and HACD3/PTPLAD1 is proposed to be part of a signaling network regulating INSR autophosphorylation and endocytosis.

It is found in the cytoplasm. The protein localises to the cytosol. It carries out the reaction (6R)-10-formyltetrahydrofolate + 5-amino-1-(5-phospho-beta-D-ribosyl)imidazole-4-carboxamide = 5-formamido-1-(5-phospho-D-ribosyl)imidazole-4-carboxamide + (6S)-5,6,7,8-tetrahydrofolate. It catalyses the reaction 10-formyldihydrofolate + 5-amino-1-(5-phospho-beta-D-ribosyl)imidazole-4-carboxamide = 5-formamido-1-(5-phospho-D-ribosyl)imidazole-4-carboxamide + 7,8-dihydrofolate. The enzyme catalyses IMP + H2O = 5-formamido-1-(5-phospho-D-ribosyl)imidazole-4-carboxamide. The protein operates within purine metabolism; IMP biosynthesis via de novo pathway; 5-formamido-1-(5-phospho-D-ribosyl)imidazole-4-carboxamide from 5-amino-1-(5-phospho-D-ribosyl)imidazole-4-carboxamide (10-formyl THF route): step 1/1. It participates in purine metabolism; IMP biosynthesis via de novo pathway; IMP from 5-formamido-1-(5-phospho-D-ribosyl)imidazole-4-carboxamide: step 1/1. Its activity is regulated as follows. AMP and XMP inhibit AICAR formyltransferase activity. AICAR formyltransferase activity is competitively inhibited by 2-[5-hydroxy-3-methyl-1-(2-methyl-4-sulfo-phenyl)-1H-pyrazol-4-ylazo]-4-sulfo-benzoic acid (326203-A). FAICAR cyclization is competitively inhibited by 1,5-dihydroimidazo[4,5-c][1,2,6]thiadiazin-4(3H)-one-2,2-dioxide and the corresponding nucleoside and nucleoside monophosphate. In terms of biological role, bifunctional enzyme that catalyzes the last two steps of purine biosynthesis. Acts as a transformylase that incorporates a formyl group to the AMP analog AICAR (5-amino-1-(5-phospho-beta-D-ribosyl)imidazole-4-carboxamide) to produce the intermediate formyl-AICAR (FAICAR). Can use both 10-formyldihydrofolate and 10-formyltetrahydrofolate as the formyl donor in this reaction. Also catalyzes the cyclization of FAICAR to inosine monophosphate (IMP). Promotes insulin receptor/INSR autophosphorylation and is involved in INSR internalization. The sequence is that of Bifunctional purine biosynthesis protein ATIC (ATIC) from Gallus gallus (Chicken).